Reading from the N-terminus, the 243-residue chain is Probable septum site-determining protein MinC (243 aa).

It belongs to the MinC family. In terms of assembly, interacts with MinD and FtsZ.

Its function is as follows. Cell division inhibitor that blocks the formation of polar Z ring septums. Rapidly oscillates between the poles of the cell to destabilize FtsZ filaments that have formed before they mature into polar Z rings. Prevents FtsZ polymerization. The sequence is that of Probable septum site-determining protein MinC from Agathobacter rectalis (strain ATCC 33656 / DSM 3377 / JCM 17463 / KCTC 5835 / VPI 0990) (Eubacterium rectale).